We begin with the raw amino-acid sequence, 153 residues long: UPF0756 membrane protein LSL_0936 (153 aa).

5 helical membrane passes run 4–24 (WIFL…SLLI), 26–46 (GAVV…YPVI), 51–71 (INWG…TGQI), 86–106 (WIAV…VNLL), and 116–136 (LVIG…GPVI).

This sequence belongs to the UPF0756 family.

Its subcellular location is the cell membrane. The chain is UPF0756 membrane protein LSL_0936 from Ligilactobacillus salivarius (strain UCC118) (Lactobacillus salivarius).